Reading from the N-terminus, the 302-residue chain is Syntaxin-17 (302 aa).

Ser2 carries the post-translational modification N-acetylserine. At 2–228 (SEDEEKVKLR…KNLGKAAKYK (227 aa)) the chain is on the cytoplasmic side. Lys41 bears the N6-acetyllysine mark. Residues 53 to 123 (EEHINAGRTV…EELKKQFNDE (71 aa)) are a coiled coil. A Phosphotyrosine; by ABL1 modification is found at Tyr157. In terms of domain architecture, t-SNARE coiled-coil homology spans 162 to 224 (IPRDQNAAES…EEGTKNLGKA (63 aa)). Residues 229–249 (LAALPVAGALIGGVVGGPIGL) traverse the membrane as a helical segment. Residues 229 to 275 (LAALPVAGALIGGVVGGPIGLLAGFKVAGIAAALGGGVLGFTGGKLI) are necessary and sufficient for localization to autophagosome. Residues 250 to 254 (LAGFK) are Lumenal-facing. A helical membrane pass occupies residues 255–275 (VAGIAAALGGGVLGFTGGKLI). Topologically, residues 276–302 (QRRKQKMMEKLASSCPDLPSQTDKKCS) are cytoplasmic. Phosphoserine is present on Ser289. An Endoplasmic reticulum retention signal motif is present at residues 299 to 302 (KKCS).

The protein belongs to the syntaxin family. As to quaternary structure, forms a SNARE complex composed of VAMP8, SNAP29 and STX17 involved in fusion of autophagosome with lysosome. May interact with VTI1B. Probably interacts with BET1, SCFD1 and SEC22B. Interacts with PTPN2 and ABL1; involved in STX17 phosphorylation. Interacts with COPB1. Interacts with TMED9 and TMED10; the interaction is direct. Interacts with VAMP7. Interacts with RUBCNL/PACER; promoting targeting of RUBCNL/PACER to autophagosome. Interacts with VAMP8, SNAP29, VPS39 and VPS41; these interactions are increased in the absence of TMEM39A. Interacts with IRGM; promoting STX17 recruitment to autophagosomes. Interacts with ATG8 proteins GABARAP and MAP1LC3B. Interacts with RNF115; this interaction enhances STX17 stability which in turn promotes autophagosome maturation. Interacts with RAB39A (GTP-bound); the interaction promotes autophagosome-lysosome membrane fusion driven by STX17-SNAP29-VAMP8. Interacts with RAB39B; the interaction may promote a different fonction in autophagy as compared with RAB39A. Phosphorylated at Tyr-157 probably by ABL1. Dephosphorylation by PTPN2; regulates exit from the endoplasmic reticulum.

It localises to the endoplasmic reticulum membrane. Its subcellular location is the smooth endoplasmic reticulum membrane. The protein resides in the endoplasmic reticulum-Golgi intermediate compartment membrane. It is found in the cytoplasmic vesicle. The protein localises to the autophagosome membrane. It localises to the COPII-coated vesicle membrane. Its subcellular location is the cytoplasm. The protein resides in the cytosol. It is found in the mitochondrion membrane. The protein localises to the autolysosome membrane. Functionally, SNAREs, soluble N-ethylmaleimide-sensitive factor-attachment protein receptors, are essential proteins for fusion of cellular membranes. SNAREs localized on opposing membranes assemble to form a trans-SNARE complex, an extended, parallel four alpha-helical bundle that drives membrane fusion. STX17 is a SNARE of the autophagosome involved in autophagy through the direct control of autophagosome membrane fusion with the lysosome membrane. May also play a role in the early secretory pathway where it may maintain the architecture of the endoplasmic reticulum-Golgi intermediate compartment/ERGIC and Golgi and/or regulate transport between the endoplasmic reticulum, the ERGIC and the Golgi. This is Syntaxin-17 from Bos taurus (Bovine).